The sequence spans 249 residues: MQMAPQMGYDRAITVFSPDGRLFQVEYAREAVKRGTTAVGIKAADGVVLLVDKRITSRLVEAESIEKIFQIDDHIGAATSGLVADARSLVDRARVEAQVNRVSYDELIGVEVISKKICDHKQTYTQYGGVRPYGTALLIAGVDDNKPRLFETDPSGALLEYKATAIGAGRNAVVEVFEADYREDMNIDAAILLGMDALYKAAEGKFDAGTLEVGVVSLEDKKFRKLGPEEVENYVHQILEKHKGNENKE.

It belongs to the peptidase T1A family. The 20S proteasome core is composed of 14 alpha and 14 beta subunits that assemble into four stacked heptameric rings, resulting in a barrel-shaped structure. The two inner rings, each composed of seven catalytic beta subunits, are sandwiched by two outer rings, each composed of seven alpha subunits. The catalytic chamber with the active sites is on the inside of the barrel. Has a gated structure, the ends of the cylinder being occluded by the N-termini of the alpha-subunits. Is capped at one or both ends by the proteasome regulatory ATPase, PAN.

The protein resides in the cytoplasm. Its activity is regulated as follows. The formation of the proteasomal ATPase PAN-20S proteasome complex, via the docking of the C-termini of PAN into the intersubunit pockets in the alpha-rings, triggers opening of the gate for substrate entry. Interconversion between the open-gate and close-gate conformations leads to a dynamic regulation of the 20S proteasome proteolysis activity. In terms of biological role, component of the proteasome core, a large protease complex with broad specificity involved in protein degradation. The sequence is that of Proteasome subunit alpha from Methanosarcina mazei (strain ATCC BAA-159 / DSM 3647 / Goe1 / Go1 / JCM 11833 / OCM 88) (Methanosarcina frisia).